The chain runs to 132 residues: Small ribosomal subunit protein uS8 (132 aa).

The protein belongs to the universal ribosomal protein uS8 family. In terms of assembly, part of the 30S ribosomal subunit. Contacts proteins S5 and S12.

In terms of biological role, one of the primary rRNA binding proteins, it binds directly to 16S rRNA central domain where it helps coordinate assembly of the platform of the 30S subunit. This chain is Small ribosomal subunit protein uS8, found in Streptococcus suis (strain 98HAH33).